The sequence spans 670 residues: MSRSAFTALLLSCVLLALSMPARADDLPYRFGLGKADITGEAAEVGMMGYSSLEQKTAGIHMRQWARAFVIEEAASGRRLVYVNTDLGMIFQAVHLKVLARLKAKYPGVYDENNVMLAATHTHSGPGGFSHYAMYNLSVLGFQEKTFNAIVDGIVRSIERAQARLQPGRLFYGSGELRNANRNRSLLSHLKNPDIVGYEDGIDPQMSVLSFVDANGELAGAISWFPVHSTSMTNANHLISPDNKGYASYHWEHDVSRKSGFVAAFAQTNAGNLSPNLNLKPGSGPFDNEFDNTREIGLRQFAKAYEIAGQAQEEVLGELDSRFRFVDFTRLPIRPEFTDGQPRQLCTAAIGTSLAAGSTEDGPGPLGLEEGNNPFLSALGGLLTGVPPQELVQCQAEKTILADTGNKKPYPWTPTVLPIQMFRIGQLELLGAPAEFTVMAGVRIRRAVQAASEAAGIRHVVFNGYANAYASYVTTREEYAAQEYEGGSTLYGPWTQAAYQQLFVDMAVALRERLPVETSAIAPDLSCCQMNFQTGVVADDPYIGKSFGDVLQQPRESYRIGDKVTVAFVTGHPKNDLRTEKTFLEVVNIGKDGKQTPETVATDNDWDTQYRWERVGISASKATISWSIPPGTEPGHYYIRHYGNAKNFWTQKISEIGGSTRSFEVLGTTP.

The first 24 residues, 1–24 (MSRSAFTALLLSCVLLALSMPARA), serve as a signal peptide directing secretion. Residue histidine 61 coordinates Mg(2+). Substrate-binding residues include asparagine 84, glutamine 92, and aspartate 111. A Zn(2+)-binding site is contributed by histidine 121. Residue serine 130 coordinates substrate. Position 228 (histidine 228) interacts with Zn(2+). Serine 274 functions as the Nucleophile in the catalytic mechanism. Residues cysteine 346 and cysteine 394 are joined by a disulfide bond. Position 435 (glutamate 435) interacts with Zn(2+). A substrate-binding site is contributed by tyrosine 469. A Zn(2+)-binding site is contributed by tyrosine 472. Aspartate 603, aspartate 605, and threonine 608 together coordinate Mg(2+). The tract at residues 644–670 (NAKNFWTQKISEIGGSTRSFEVLGTTP) is required for correct folding and localization.

The protein belongs to the neutral ceramidase family. As to quaternary structure, homodimer. The cofactor is Zn(2+). Mg(2+) serves as cofactor.

It localises to the secreted. The enzyme catalyses an N-acylsphing-4-enine + H2O = sphing-4-enine + a fatty acid. With respect to regulation, inhibited by EDTA, EGTA and D/L-sphinganine D-erythro-sphingosine. L-erythro-sphingosine is a less powerful inhibitor. Stimulated by glycerophospholipids: cardiolipin is the most effective, followed by phosphatidic acid, phosphatidylethanolamine and phosphatidylglycerol, whereas phosphatidylcholine, lysophosphatidic acid and diacylglycerol are less effective. Functionally, catalyzes the cleavage of the N-acyl linkage of the ceramides (Cers) to yield sphingosine (Sph) and free fatty acid at an optimal pH of 8-9. Also catalyzes the synthesis of Cers from Sph and fatty acid. This chain is Neutral ceramidase, found in Pseudomonas aeruginosa (strain ATCC 15692 / DSM 22644 / CIP 104116 / JCM 14847 / LMG 12228 / 1C / PRS 101 / PAO1).